The sequence spans 418 residues: Light-independent protochlorophyllide reductase subunit N (418 aa).

C17, C42, and C103 together coordinate [4Fe-4S] cluster.

The protein belongs to the BchN/ChlN family. As to quaternary structure, protochlorophyllide reductase is composed of three subunits; ChlL, ChlN and ChlB. Forms a heterotetramer of two ChlB and two ChlN subunits. It depends on [4Fe-4S] cluster as a cofactor.

The catalysed reaction is chlorophyllide a + oxidized 2[4Fe-4S]-[ferredoxin] + 2 ADP + 2 phosphate = protochlorophyllide a + reduced 2[4Fe-4S]-[ferredoxin] + 2 ATP + 2 H2O. Its pathway is porphyrin-containing compound metabolism; chlorophyll biosynthesis (light-independent). Functionally, component of the dark-operative protochlorophyllide reductase (DPOR) that uses Mg-ATP and reduced ferredoxin to reduce ring D of protochlorophyllide (Pchlide) to form chlorophyllide a (Chlide). This reaction is light-independent. The NB-protein (ChlN-ChlB) is the catalytic component of the complex. In Prochlorococcus marinus (strain AS9601), this protein is Light-independent protochlorophyllide reductase subunit N.